Consider the following 283-residue polypeptide: 4-diphosphocytidyl-2-C-methyl-D-erythritol kinase (283 aa).

The active site involves K10. P99–S109 is an ATP binding site. Residue D141 is part of the active site.

It belongs to the GHMP kinase family. IspE subfamily. As to quaternary structure, homodimer.

It carries out the reaction 4-CDP-2-C-methyl-D-erythritol + ATP = 4-CDP-2-C-methyl-D-erythritol 2-phosphate + ADP + H(+). The protein operates within isoprenoid biosynthesis; isopentenyl diphosphate biosynthesis via DXP pathway; isopentenyl diphosphate from 1-deoxy-D-xylulose 5-phosphate: step 3/6. Its function is as follows. Catalyzes the phosphorylation of the position 2 hydroxy group of 4-diphosphocytidyl-2C-methyl-D-erythritol. This is 4-diphosphocytidyl-2-C-methyl-D-erythritol kinase from Escherichia coli O81 (strain ED1a).